Reading from the N-terminus, the 266-residue chain is Apoptosis regulator ced-9 (266 aa).

A disordered region spans residues 1-58 (MVDSMDMANSSQNTFRRRTMATSEMREFLSTKDAEPNNFGMQTIPESPTPSTPTRRMS). The span at 24-35 (EMREFLSTKDAE) shows a compositional bias: basic and acidic residues. Residues 75-94 (IQGFVVDYFTYRIAQNGLDW) carry the BH4 motif. The BH1 motif lies at 156 to 174 (NTPCPMSYGRLIGLISFGG). The short motif at 208-223 (SWKEHNRSWADFMKLG) is the BH2 element.

The protein belongs to the Bcl-2 family. As to quaternary structure, interacts with asymmetric homodimer ced-4; the interaction sequesters ced-4. Interacts with egl-1; the interaction results in ced-4 release. Interacts with dre-1; the interaction inhibits ced-9 activity, either directly or indirectly. Interacts with dct-1. May form a complex composed of ced-9, ced-4 and mac-1.

The protein resides in the perikaryon. It is found in the synapse. Its subcellular location is the endomembrane system. It localises to the mitochondrion membrane. Functionally, plays a major role in programmed cell death (PCD, apoptosis). egl-1 binds to and directly inhibits the activity of ced-9, releasing the cell death activator ced-4 from a ced-9/ced-4 containing protein complex and allowing ced-4 to activate the cell-killing caspase ced-3. During larval development, required for the elimination of transient presynaptic components downstream of egl-1 and upstream of ced-4 and ced-3 apoptotic pathway. The polypeptide is Apoptosis regulator ced-9 (ced-9) (Caenorhabditis briggsae).